Reading from the N-terminus, the 459-residue chain is Peptidyl-prolyl cis-trans isomerase FKBP4 (459 aa).

At Met-1 the chain carries N-acetylmethionine; in peptidyl-prolyl cis-trans isomerase FKBP4; alternate. The segment at 1-24 is disordered; that stretch reads MTAEEMKATESGAQSAPLPMEGVD. Thr-2 is subject to N-acetylthreonine; in peptidyl-prolyl cis-trans isomerase FKBP4, N-terminally processed; partial. Positions 50-138 constitute a PPIase FKBP-type 1 domain; that stretch reads GDRVFVHYTG…VFEVELFEFK (89 aa). Residue Thr-143 is modified to Phosphothreonine; by CK2. The 87-residue stretch at 167–253 folds into the PPIase FKBP-type 2 domain; that stretch reads GAIVEVALEG…KYELHLKSFE (87 aa). Tyr-220 is modified (phosphotyrosine). The segment at 267-400 is interaction with tubulin; the sequence is LEQSTIVKER…TQLAVCQQRI (134 aa). TPR repeat units follow at residues 270-303, 319-352, and 353-386; these read STIV…LEYE, LASH…DSNN, and EKGL…YPNN. Position 282 is an N6-acetyllysine (Lys-282). At Arg-373 the chain carries Omega-N-methylarginine. The tract at residues 421 to 459 is disordered; it reads EENKAKAEASSGDHPTDTEMKEEQKSNTAGSQSQVETEA. The segment covering 434–445 has biased composition (basic and acidic residues); that stretch reads HPTDTEMKEEQK. Thr-436 bears the Phosphothreonine mark. Lys-441 participates in a covalent cross-link: Glycyl lysine isopeptide (Lys-Gly) (interchain with G-Cter in SUMO1). Polar residues predominate over residues 446–459; the sequence is SNTAGSQSQVETEA. Residues Ser-451 and Ser-453 each carry the phosphoserine modification.

In terms of assembly, homodimer. Interacts with GLMN. Associates with HSP90AA1 and HSP70 in steroid hormone receptor complexes. Also interacts with peroxisomal phytanoyl-CoA alpha-hydroxylase (PHYH). Interacts with NR3C1 and dynein. Interacts with HSF1 in the HSP90 complex. Associates with tubulin. Interacts with MAPT/TAU. Interacts (via TPR domain) with S100A1, S100A2 and S100A6; the interaction is Ca(2+) dependent. Interaction with S100A1 and S100A2 (but not with S100A6) leads to inhibition of FKBP4-HSP90 interaction. Interacts with dynein; causes partially NR3C1 transport to the nucleus. Post-translationally, phosphorylation by CK2 results in loss of HSP90 binding activity. As to expression, widely expressed.

It is found in the cytoplasm. It localises to the cytosol. The protein localises to the mitochondrion. Its subcellular location is the nucleus. The protein resides in the cytoskeleton. It is found in the cell projection. It localises to the axon. The catalysed reaction is [protein]-peptidylproline (omega=180) = [protein]-peptidylproline (omega=0). Inhibited by FK506. In terms of biological role, immunophilin protein with PPIase and co-chaperone activities. Component of steroid receptors heterocomplexes through interaction with heat-shock protein 90 (HSP90). May play a role in the intracellular trafficking of heterooligomeric forms of steroid hormone receptors between cytoplasm and nuclear compartments. The isomerase activity controls neuronal growth cones via regulation of TRPC1 channel opening. Also acts as a regulator of microtubule dynamics by inhibiting MAPT/TAU ability to promote microtubule assembly. May have a protective role against oxidative stress in mitochondria. In Homo sapiens (Human), this protein is Peptidyl-prolyl cis-trans isomerase FKBP4 (FKBP4).